A 259-amino-acid polypeptide reads, in one-letter code: Tegument protein UL51 homolog (259 aa).

Cys9 carries the S-palmitoyl cysteine; by host lipid modification.

It belongs to the herpesviridae UL51 family. As to quaternary structure, oligomerizes. Interacts with ORF53; this interaction mediates ORF53 incorporation to virions. Post-translationally, phosphorylated. In terms of processing, palmitoylation is necessary for Golgi localization.

The protein resides in the virion tegument. It is found in the host cytoplasm. Its subcellular location is the host Golgi apparatus. Functionally, plays several roles during the time course of infection, including egress of virus particles from the perinuclear space and secondary envelopment of cytoplasmic capsids that bud into specific trans-Golgi network (TGN)-derived membranes. This is Tegument protein UL51 homolog from Varicella-zoster virus (strain Dumas) (HHV-3).